Here is a 547-residue protein sequence, read N- to C-terminus: Membrane protein insertase YidC (547 aa).

The chain crosses the membrane as a helical span at residues Leu-8 to Phe-28. The segment covering Gln-37–Thr-50 has biased composition (low complexity). The tract at residues Gln-37–Thr-62 is disordered. Polar residues predominate over residues Ser-51 to Thr-62. The next 5 helical transmembrane spans lie at Val-325–Leu-345, Phe-348–Tyr-368, Gly-414–Ile-434, Trp-449–Met-469, and Leu-495–Trp-515.

The protein belongs to the OXA1/ALB3/YidC family. Type 1 subfamily. As to quaternary structure, interacts with the Sec translocase complex via SecD. Specifically interacts with transmembrane segments of nascent integral membrane proteins during membrane integration.

The protein resides in the cell inner membrane. In terms of biological role, required for the insertion and/or proper folding and/or complex formation of integral membrane proteins into the membrane. Involved in integration of membrane proteins that insert both dependently and independently of the Sec translocase complex, as well as at least some lipoproteins. Aids folding of multispanning membrane proteins. This is Membrane protein insertase YidC from Helicobacter pylori (strain ATCC 700392 / 26695) (Campylobacter pylori).